A 430-amino-acid chain; its full sequence is Tol-Pal system protein TolB (430 aa).

The signal sequence occupies residues 1-21; the sequence is MKQAFRVALGFLVLWASVLHA.

Belongs to the TolB family. As to quaternary structure, the Tol-Pal system is composed of five core proteins: the inner membrane proteins TolA, TolQ and TolR, the periplasmic protein TolB and the outer membrane protein Pal. They form a network linking the inner and outer membranes and the peptidoglycan layer.

It localises to the periplasm. In terms of biological role, part of the Tol-Pal system, which plays a role in outer membrane invagination during cell division and is important for maintaining outer membrane integrity. TolB occupies a key intermediary position in the Tol-Pal system because it communicates directly with both membrane-embedded components, Pal in the outer membrane and TolA in the inner membrane. The sequence is that of Tol-Pal system protein TolB from Yersinia pestis.